The primary structure comprises 442 residues: C4-dicarboxylate transport protein 4 (442 aa).

Helical transmembrane passes span 20 to 40, 53 to 73, 90 to 110, 160 to 180, 209 to 229, and 233 to 253; these read ILYVQVLIAIVLGVLIGYFYP, FIALIKMMIAPVIFCTVVHGI, LIYFESVSTVALAVGLLVGEV, GDLLQVLLISILSGFAIAFLG, PVGAFGAMAFTVGAYGLGSLL, and ALIGTFYLTSILFVLIVLGAI.

This sequence belongs to the dicarboxylate/amino acid:cation symporter (DAACS) (TC 2.A.23) family.

Its subcellular location is the cell inner membrane. In terms of biological role, responsible for the transport of dicarboxylates such as succinate, fumarate, and malate from the periplasm across the membrane. The protein is C4-dicarboxylate transport protein 4 of Bradyrhizobium diazoefficiens (strain JCM 10833 / BCRC 13528 / IAM 13628 / NBRC 14792 / USDA 110).